The following is a 486-amino-acid chain: Glutamyl-tRNA(Gln) amidotransferase subunit A (486 aa).

Catalysis depends on charge relay system residues Lys-76 and Ser-151. Catalysis depends on Ser-175, which acts as the Acyl-ester intermediate.

This sequence belongs to the amidase family. GatA subfamily. In terms of assembly, heterotrimer of A, B and C subunits.

It carries out the reaction L-glutamyl-tRNA(Gln) + L-glutamine + ATP + H2O = L-glutaminyl-tRNA(Gln) + L-glutamate + ADP + phosphate + H(+). Its function is as follows. Allows the formation of correctly charged Gln-tRNA(Gln) through the transamidation of misacylated Glu-tRNA(Gln) in organisms which lack glutaminyl-tRNA synthetase. The reaction takes place in the presence of glutamine and ATP through an activated gamma-phospho-Glu-tRNA(Gln). The protein is Glutamyl-tRNA(Gln) amidotransferase subunit A of Nitrosomonas eutropha (strain DSM 101675 / C91 / Nm57).